Consider the following 231-residue polypeptide: Protein virC1 (231 aa).

This is Protein virC1 (virC1) from Rhizobium radiobacter (Agrobacterium tumefaciens).